A 707-amino-acid chain; its full sequence is Elongation factor G (707 aa).

In terms of domain architecture, tr-type G spans 8-294 (ERYRNFGIIA…GVVDYLPSPL (287 aa)). Residues 17–24 (AHIDAGKT), 92–96 (DTPGH), and 146–149 (NKMD) each bind GTP.

The protein belongs to the TRAFAC class translation factor GTPase superfamily. Classic translation factor GTPase family. EF-G/EF-2 subfamily.

Its subcellular location is the cytoplasm. Its function is as follows. Catalyzes the GTP-dependent ribosomal translocation step during translation elongation. During this step, the ribosome changes from the pre-translocational (PRE) to the post-translocational (POST) state as the newly formed A-site-bound peptidyl-tRNA and P-site-bound deacylated tRNA move to the P and E sites, respectively. Catalyzes the coordinated movement of the two tRNA molecules, the mRNA and conformational changes in the ribosome. The protein is Elongation factor G of Hyphomonas neptunium (strain ATCC 15444).